A 583-amino-acid polypeptide reads, in one-letter code: Poly [ADP-ribose] polymerase 2 (583 aa).

Residues 1–77 (MAARRRRSTG…GMPGRSWASK (77 aa)) form a disordered region. The interval 1–103 (MAARRRRSTG…VDPECTAKVG (103 aa)) is N-terminal region (NTR). 2 short sequence motifs (nuclear localization signal) span residues 21–22 (KR) and 35–40 (PAKKTR). N6-acetyllysine occurs at positions 37 and 38. Basic and acidic residues predominate over residues 57-67 (ANKDRTEDKQD). In terms of domain architecture, WGR spans 104 to 201 (KAHVYCEGND…EKFEKVPGKY (98 aa)). Ser226 and Ser232 each carry phosphoserine. The PARP alpha-helical domain maps to 231–348 (ESQLDLRVQE…DIEIAIKLVK (118 aa)). A PARP catalytic domain is found at 356–583 (HPLDQHYRNL…KVQFNFLQLW (228 aa)). NAD(+) contacts are provided by residues 428-430 (HGS), Gly437, Arg444, and Ser470. Glu558 functions as the For poly [ADP-ribose] polymerase activity in the catalytic mechanism.

The protein belongs to the ARTD/PARP family. As to quaternary structure, component of a base excision repair (BER) complex, containing at least XRCC1, PARP1, POLB and LRIG3. Homo- and heterodimer with PARP1. Interacts (via the PARP catalytic domain) with HPF1. Interacts with core nucleosomes. Post-translationally, auto poly-ADP-ribosylated on serine residues, leading to dissociation of the PARP2-HPF1 complex from chromatin. Poly-ADP-ribosylated by PARP1. Acetylation reduces DNA binding and enzymatic activity. In terms of processing, proteolytically cleaved by caspase-8 (CASP8) in response to apoptosis, leading to its inactivation. As to expression, widely expressed, mainly in actively dividing tissues. The highest levels are in the brain, heart, pancreas, skeletal muscle and testis; also detected in kidney, liver, lung, placenta, ovary and spleen; levels are low in leukocytes, colon, small intestine, prostate and thymus.

The protein resides in the nucleus. It localises to the chromosome. The enzyme catalyses NAD(+) + (ADP-D-ribosyl)n-acceptor = nicotinamide + (ADP-D-ribosyl)n+1-acceptor + H(+).. The catalysed reaction is L-seryl-[protein] + NAD(+) = O-(ADP-D-ribosyl)-L-seryl-[protein] + nicotinamide + H(+). It carries out the reaction L-aspartyl-[protein] + NAD(+) = 4-O-(ADP-D-ribosyl)-L-aspartyl-[protein] + nicotinamide. It catalyses the reaction L-glutamyl-[protein] + NAD(+) = 5-O-(ADP-D-ribosyl)-L-glutamyl-[protein] + nicotinamide. ADP-ribosyltransferase activity is regulated via an allosteric activation mechanism. In absence of activation signal, PARP2 is autoinhibited by the PARP alpha-helical domain (also named HD region), which prevents effective NAD(+)-binding. Activity is highly stimulated by signals, which unfold the PARP alpha-helical domain, relieving autoinhibition. Poly-ADP-ribosyltransferase activity is tightly regulated and PARP2 is removed from damaged chromatin following initial poly-ADP-ribosylation of chromatin to avoid prolonged residence (trapping) that has cytotoxic consequences. CHD1L promotes PARP2 removal from chromatin. ADP-ribosyltransferase activity is inhibited by a number of PARP inhibitors (PARPi) compounds, that are used the treatment of breast or ovarian cancers that have defects in DNA repair by homologous recombination. PARPi molecules (niraparib, talazoparib, and, to a lesser extent, olaparib) also trap PARP2 at DNA damage sites. In terms of biological role, poly-ADP-ribosyltransferase that mediates poly-ADP-ribosylation of proteins and plays a key role in DNA repair. Mediates glutamate, aspartate or serine ADP-ribosylation of proteins: the ADP-D-ribosyl group of NAD(+) is transferred to the acceptor carboxyl group of target residues and further ADP-ribosyl groups are transferred to the 2'-position of the terminal adenosine moiety, building up a polymer with an average chain length of 20-30 units. Serine ADP-ribosylation of proteins constitutes the primary form of ADP-ribosylation of proteins in response to DNA damage. Mediates glutamate and aspartate ADP-ribosylation of target proteins in absence of HPF1. Following interaction with HPF1, catalyzes serine ADP-ribosylation of target proteins; HPF1 conferring serine specificity by completing the PARP2 active site. PARP2 initiates the repair of double-strand DNA breaks: recognizes and binds DNA breaks within chromatin and recruits HPF1, licensing serine ADP-ribosylation of target proteins, such as histones, thereby promoting decompaction of chromatin and the recruitment of repair factors leading to the reparation of DNA strand breaks. HPF1 initiates serine ADP-ribosylation but restricts the polymerase activity of PARP2 in order to limit the length of poly-ADP-ribose chains. Specifically mediates formation of branched poly-ADP-ribosylation. Branched poly-ADP-ribose chains are specifically recognized by some factors, such as APLF. In addition to proteins, also able to ADP-ribosylate DNA: preferentially acts on 5'-terminal phosphates at DNA strand breaks termini in nicked duplex. The polypeptide is Poly [ADP-ribose] polymerase 2 (Homo sapiens (Human)).